The sequence spans 606 residues: MKWITLICLLISSTLIESRIIFKRDTDVDHHKHIADMYNLLTERTFKGLTLAIVSQNLQKCSLEELSKLVNEINDFAKSCTGNDKTPECEKPIGTLFYDKLCADPKVGVNYEWSKECCSKQDPERAQCFRAHRVFEHNPVRPKPEETCALFKEHPDDLLSAFIHEEARNHPDLYPPAVLLLTQQYGKLVEHCCEEEDKDKCFAEKMKELMKHSHSIEDKQKHFCWIVNNYPERVIKALNLARVSHRYPKPDFKLAHKFTEETTHFIKDCCHGDMFECMTERLELSEHTCQHKDELSTKLEKCCNLPLLERTYCIVTLENDDVPAELSKPITEFTEDPHVCEKYAENKSFLEISPWQSQETPELSEQFLLQSAKEYESLLNKCCFSDNPPECYKDGADRFMNEAKERFAYLKQNCDILHEHGEYLFENELLIRYTKKMPQVSDETLIGIAHQMADIGEHCCAVPENQRMPCAEGDLTILIGKMCERQKKTFINNHVAHCCTDSYSGMRSCFTALGPDEDYVPPPVTDDTFHFDDKICTANDKEKQHIKQKFLVKLIKVSPKLEKNHIDEWLLEFLKMVQKCCTADEHQPCFDTEKPVLIEHCQKLHP.

The signal sequence occupies residues 1-18 (MKWITLICLLISSTLIES). A propeptide spanning residues 19–24 (RIIFKR) is cleaved from the precursor. 3 consecutive Albumin domains span residues 22–211 (FKRD…ELMK), 212–401 (HSHS…RFMN), and 402–599 (EAKE…VLIE). Histidine 30 lines the Cu cation pocket. Cystine bridges form between cysteine 80/cysteine 89, cysteine 102/cysteine 118, cysteine 117/cysteine 128, cysteine 148/cysteine 193, cysteine 192/cysteine 201, cysteine 224/cysteine 270, cysteine 269/cysteine 277, cysteine 289/cysteine 303, cysteine 302/cysteine 313, cysteine 340/cysteine 383, cysteine 382/cysteine 391, cysteine 414/cysteine 460, cysteine 459/cysteine 470, cysteine 483/cysteine 499, cysteine 498/cysteine 509, cysteine 536/cysteine 581, and cysteine 580/cysteine 589.

Belongs to the ALB/AFP/VDB family. As to expression, plasma.

It localises to the secreted. Functionally, binds water, Ca(2+), Na(+), K(+), fatty acids, hormones, bilirubin and drugs. Its main function is the regulation of the colloidal osmotic pressure of blood. This chain is Albumin A (alb-a), found in Xenopus laevis (African clawed frog).